The following is a 147-amino-acid chain: Hemoglobin subunit gamma-1 (147 aa).

G2 carries the post-translational modification N-acetylglycine. The Globin domain occupies 3 to 147 (HFTEEDKATI…VASALSSRYH (145 aa)). T13 carries the post-translational modification Phosphothreonine. Residues S45, S51, and S53 each carry the phosphoserine modification. At K60 the chain carries N6-acetyllysine. H64 is a heme b binding site. Residue K83 is modified to N6-acetyllysine. H93 contacts heme b. C94 is modified (S-nitrosocysteine). Phosphoserine is present on S140.

It belongs to the globin family. As to quaternary structure, heterotetramer of two alpha chains and two gamma chains in fetal hemoglobin (Hb F). As to expression, red blood cells.

In terms of biological role, gamma chains make up the fetal hemoglobin F, in combination with alpha chains. The protein is Hemoglobin subunit gamma-1 (HBG1) of Gorilla gorilla gorilla (Western lowland gorilla).